We begin with the raw amino-acid sequence, 723 residues long: Nucleolar protein 11 (723 aa).

N6-methyllysine is present on K346. The tract at residues 549–572 is disordered; it reads FGPEDGNCSEDSQQLNDKPADTAH.

As to quaternary structure, interacts with UTP4. Interacts with FBL/fibrillarin in a transcription-dependent manner. May associate with the proposed t-UTP subcomplex of the SSU processome containing at least UTP4, WDR43, HEATR1, UTP15, WDR75.

It localises to the nucleus. Its subcellular location is the nucleolus. In terms of biological role, ribosome biogenesis factor. May be required for both optimal rDNA transcription and small subunit (SSU) pre-rRNA processing at sites A', A0, 1 and 2b. In Mus musculus (Mouse), this protein is Nucleolar protein 11 (Nol11).